Reading from the N-terminus, the 180-residue chain is Adenine phosphoribosyltransferase (180 aa).

An N-acetylserine modification is found at Ser2. 3 positions are modified to phosphoserine: Ser4, Ser15, and Ser30. At Tyr60 the chain carries Phosphotyrosine. The residue at position 66 (Ser66) is a Phosphoserine. Lys114 carries the post-translational modification N6-acetyllysine. Thr135 is subject to Phosphothreonine.

The protein belongs to the purine/pyrimidine phosphoribosyltransferase family. As to quaternary structure, homodimer.

It localises to the cytoplasm. It carries out the reaction AMP + diphosphate = 5-phospho-alpha-D-ribose 1-diphosphate + adenine. The protein operates within purine metabolism; AMP biosynthesis via salvage pathway; AMP from adenine: step 1/1. Catalyzes a salvage reaction resulting in the formation of AMP, that is energically less costly than de novo synthesis. This is Adenine phosphoribosyltransferase from Mus pahari (Gairdner's shrew-mouse).